A 954-amino-acid chain; its full sequence is Mitogen-activated protein kinase kinase kinase 10 (954 aa).

Positions 16-81 constitute an SH3 domain; it reads PAGPVWTAVF…PSNYVAPGAP (66 aa). The Protein kinase domain occupies 98–360; the sequence is LQLEEIIGVG…GSILKRLEVI (263 aa). Residues 104–112 and Lys125 each bind ATP; that span reads IGVGGFGKV. Catalysis depends on Asp222, which acts as the Proton acceptor. Thr258 bears the Phosphothreonine; by autocatalysis mark. Ser262 carries the post-translational modification Phosphoserine; by autocatalysis and MAP4K1. 2 leucine-zipper regions span residues 384-405 and 419-440; these read IQHM…EEEL and LRRR…ELHL. Disordered stretches follow at residues 490-665, 716-739, and 757-954; these read PTLD…RWGH, RFPR…PGLG, and STRS…HGSH. Phosphoserine is present on residues Ser498, Ser502, and Ser506. Positions 501 to 511 are enriched in low complexity; it reads ASPPASPSIIP. At Thr558 the chain carries Phosphothreonine. A compositionally biased stretch (basic and acidic residues) spans 566-578; the sequence is QKERVGGEERLKG. Positions 611–620 are enriched in acidic residues; the sequence is EMEEFAEAED. Residues 631–640 are compositionally biased toward low complexity; sequence STPSYLSVPL. Pro residues predominate over residues 773 to 790; that stretch reads APSPPPSPPAPTPTPSPS. The residue at position 857 (Arg857) is an Omega-N-methylarginine. Residues 913 to 927 are compositionally biased toward pro residues; that stretch reads PSRPDTPESPGPPSV.

Belongs to the protein kinase superfamily. STE Ser/Thr protein kinase family. MAP kinase kinase kinase subfamily. In terms of assembly, homodimer. Interacts with SH3RF2. Requires Mg(2+) as cofactor. In terms of processing, autophosphorylation on serine and threonine residues within the activation loop plays a role in enzyme activation. As to expression, expressed in brain and skeletal muscle.

The catalysed reaction is L-seryl-[protein] + ATP = O-phospho-L-seryl-[protein] + ADP + H(+). It catalyses the reaction L-threonyl-[protein] + ATP = O-phospho-L-threonyl-[protein] + ADP + H(+). With respect to regulation, homodimerization via the leucine zipper domains is required for autophosphorylation and subsequent activation. Functionally, activates the JUN N-terminal pathway. The chain is Mitogen-activated protein kinase kinase kinase 10 (MAP3K10) from Homo sapiens (Human).